A 115-amino-acid polypeptide reads, in one-letter code: Aspartate 1-decarboxylase (115 aa).

S24 functions as the Schiff-base intermediate with substrate; via pyruvic acid in the catalytic mechanism. S24 carries the post-translational modification Pyruvic acid (Ser). T56 is a substrate binding site. Residue Y57 is the Proton donor of the active site. 72–74 (GAA) is a binding site for substrate.

This sequence belongs to the PanD family. As to quaternary structure, heterooctamer of four alpha and four beta subunits. Requires pyruvate as cofactor. In terms of processing, is synthesized initially as an inactive proenzyme, which is activated by self-cleavage at a specific serine bond to produce a beta-subunit with a hydroxyl group at its C-terminus and an alpha-subunit with a pyruvoyl group at its N-terminus.

It is found in the cytoplasm. The catalysed reaction is L-aspartate + H(+) = beta-alanine + CO2. Its pathway is cofactor biosynthesis; (R)-pantothenate biosynthesis; beta-alanine from L-aspartate: step 1/1. Catalyzes the pyruvoyl-dependent decarboxylation of aspartate to produce beta-alanine. This chain is Aspartate 1-decarboxylase, found in Pseudothermotoga lettingae (strain ATCC BAA-301 / DSM 14385 / NBRC 107922 / TMO) (Thermotoga lettingae).